The following is a 323-amino-acid chain: o-succinylbenzoate synthase (323 aa).

The Proton donor role is filled by Lys134. 3 residues coordinate Mg(2+): Asp162, Glu191, and Asp214. Catalysis depends on Lys236, which acts as the Proton acceptor.

This sequence belongs to the mandelate racemase/muconate lactonizing enzyme family. MenC type 1 subfamily. A divalent metal cation is required as a cofactor.

The enzyme catalyses (1R,6R)-6-hydroxy-2-succinyl-cyclohexa-2,4-diene-1-carboxylate = 2-succinylbenzoate + H2O. It functions in the pathway quinol/quinone metabolism; 1,4-dihydroxy-2-naphthoate biosynthesis; 1,4-dihydroxy-2-naphthoate from chorismate: step 4/7. It participates in quinol/quinone metabolism; menaquinone biosynthesis. In terms of biological role, converts 2-succinyl-6-hydroxy-2,4-cyclohexadiene-1-carboxylate (SHCHC) to 2-succinylbenzoate (OSB). The chain is o-succinylbenzoate synthase from Edwardsiella ictaluri (strain 93-146).